The primary structure comprises 242 residues: Myogenic factor 6 (242 aa).

The segment at 31-63 (SPLYPGSDGTLSPCQDQMPPEAGSDSSGEEHVL) is disordered. The 52-residue stretch at 93–144 (DRRKAATLRERRRLKKINEAFEALKRRTVANPNQRLPKVEILRSAISYIERL) folds into the bHLH domain.

In terms of assembly, efficient DNA binding requires dimerization with another bHLH protein. Interacts with CSRP3. As to expression, skeletal muscle.

The protein resides in the nucleus. Involved in muscle differentiation (myogenic factor). Induces fibroblasts to differentiate into myoblasts. Probable sequence specific DNA-binding protein. The chain is Myogenic factor 6 (MYF6) from Homo sapiens (Human).